The following is a 139-amino-acid chain: MRSFEFFEHTADVGIRAYGKSLEEAFSNAALGVFEIITDTSKVKPIEYREIYLNGYDLENLLYKWIEELLYYYDSELMVFSKFDLMIDQDSMTLEGKAWGEKFNGKIHERRTVVKAMTYHQLSIEKTENCYLITFVVDI.

The Ca(2+) site is built by aspartate 12, aspartate 138, and isoleucine 139.

The protein belongs to the archease family.

In terms of biological role, activates the tRNA-splicing ligase complex by facilitating the enzymatic turnover of catalytic subunit RtcB. Acts by promoting the guanylylation of RtcB, a key intermediate step in tRNA ligation. Can also alter the NTP specificity of RtcB such that ATP, dGTP or ITP is used efficiently. This chain is Protein archease, found in Saccharolobus islandicus (strain Y.G.57.14 / Yellowstone #1) (Sulfolobus islandicus).